Reading from the N-terminus, the 1272-residue chain is Presporeless protein A (1272 aa).

Positions 146-161 match the Nuclear localization signal motif; that stretch reads KDKRIKPIDPKKKISR. Disordered stretches follow at residues 369–403 and 468–490; these read ASTI…DDTS and STSS…NQLK. The segment covering 374-392 has biased composition (acidic residues); it reads DGEEEDDDDDDNDVDGNDD. Basic and acidic residues predominate over residues 393–403; that stretch reads DNNKEKVDDTS. Over residues 468 to 487 the composition is skewed to low complexity; it reads STSSTNTASSTRSKASSNSN.

The protein localises to the nucleus. In terms of biological role, functions autonomously, very early in the prespore pathway, to control prespore cell differentiation, maybe at the level of transcription. Also required for proper aggregation. The polypeptide is Presporeless protein A (pslA) (Dictyostelium discoideum (Social amoeba)).